Here is a 465-residue protein sequence, read N- to C-terminus: Respiratory transcription factor ZNF1 (465 aa).

Positions Cys8 to Cys34 form a DNA-binding region, zn(2)-C6 fungal-type.

Belongs to the MAL13 family.

It is found in the nucleus. Functionally, transcription factor that regulates respiratory growth and plays a critical role in stress adaptation during non-fermentative growth. Binds to promoters of genes involved in non-fermentative metabolism, including processes such as gluconeogenesis (PCK1, FBP1 and MDH2), glyoxylate shunt (MLS1 and ICL1) and the tricarboxylic acid cycle (ACO1). Plays a role in maintaining mitochondrial morphology and function. Also plays a role in tolerance to pH and osmotic stress, especially during the oxidative metabolism. In Saccharomyces cerevisiae (strain ATCC 204508 / S288c) (Baker's yeast), this protein is Respiratory transcription factor ZNF1.